The following is a 258-amino-acid chain: Triosephosphate isomerase (258 aa).

11–13 (NWK) provides a ligand contact to substrate. His101 functions as the Electrophile in the catalytic mechanism. Glu173 acts as the Proton acceptor in catalysis. Substrate-binding positions include Gly179, Ser219, and 240–241 (GG).

This sequence belongs to the triosephosphate isomerase family. Homodimer.

It localises to the cytoplasm. The catalysed reaction is D-glyceraldehyde 3-phosphate = dihydroxyacetone phosphate. It participates in carbohydrate biosynthesis; gluconeogenesis. It functions in the pathway carbohydrate degradation; glycolysis; D-glyceraldehyde 3-phosphate from glycerone phosphate: step 1/1. Involved in the gluconeogenesis. Catalyzes stereospecifically the conversion of dihydroxyacetone phosphate (DHAP) to D-glyceraldehyde-3-phosphate (G3P). The chain is Triosephosphate isomerase from Streptomyces avermitilis (strain ATCC 31267 / DSM 46492 / JCM 5070 / NBRC 14893 / NCIMB 12804 / NRRL 8165 / MA-4680).